We begin with the raw amino-acid sequence, 434 residues long: Glutamyl-tRNA reductase (434 aa).

Substrate contacts are provided by residues 49–52 (TCNR), Ser-109, 114–116 (EPQ), and Gln-120. Cys-50 (nucleophile) is an active-site residue. Residue 189 to 194 (GAGEMA) coordinates NADP(+).

It belongs to the glutamyl-tRNA reductase family. In terms of assembly, homodimer.

The enzyme catalyses (S)-4-amino-5-oxopentanoate + tRNA(Glu) + NADP(+) = L-glutamyl-tRNA(Glu) + NADPH + H(+). Its pathway is porphyrin-containing compound metabolism; protoporphyrin-IX biosynthesis; 5-aminolevulinate from L-glutamyl-tRNA(Glu): step 1/2. Functionally, catalyzes the NADPH-dependent reduction of glutamyl-tRNA(Glu) to glutamate 1-semialdehyde (GSA). The sequence is that of Glutamyl-tRNA reductase from Desulfatibacillum aliphaticivorans.